We begin with the raw amino-acid sequence, 401 residues long: Probable peptidoglycan glycosyltransferase FtsW (401 aa).

At 1–26 (MAEVLRWLRLDLGQSGGLAWERLDWR) the chain is on the cytoplasmic side. A helical transmembrane segment spans residues 27–47 (LALTVLALAGLGLVMVGSASV). Topologically, residues 48 to 65 (SIAEGATGDPLHYLYRQA) are periplasmic. Residues 66-86 (VFLAVALMAAVACLHLSLDQF) form a helical membrane-spanning segment. Residues 87–88 (YR) lie on the Cytoplasmic side of the membrane. The chain crosses the membrane as a helical span at residues 89-109 (GGPVLLVLGFFLLLVVLIPGV). Residues 110–118 (GREVNGATR) are Periplasmic-facing. The helical transmembrane segment at 119 to 139 (WIPLGLINLQVAEVARVCFII) threads the bilayer. Over 140-154 (YLAGYCVRRHAELPN) the chain is Cytoplasmic. A helical transmembrane segment spans residues 155–175 (TSSAFAVPLAVFSLAAVLLLA). Residues 176–180 (QPDFG) are Periplasmic-facing. A helical transmembrane segment spans residues 181-201 (TALVLMATALGLLFLAGASLW). Arginine 202 is a topological domain (cytoplasmic). A helical membrane pass occupies residues 203–223 (IGVLGLLLAGAAWLLIVGSPY). The Periplasmic portion of the chain corresponds to 224 to 278 (RWQRLTTFTDPWADPFNAGFQLTQSLIAIGRGEWFGVGLGASVQKLFYLPEAHTD). A helical membrane pass occupies residues 279-299 (FLFAVLAEELGLLGVVVVVAL). Over 300–322 (FTYLAWRGMQIGLASLRADRPFG) the chain is Cytoplasmic. Residues 323–343 (AYLAWGLTISIGLQAFINMAV) form a helical membrane-spanning segment. At 344–354 (TMGLLPTKGLT) the chain is on the periplasmic side. The chain crosses the membrane as a helical span at residues 355–375 (LPLMSYGGSSLIMTGIALALL). The Cytoplasmic portion of the chain corresponds to 376–401 (LRVDYEARLAAQQPRPRKRPSGRVRP).

It belongs to the SEDS family. FtsW subfamily.

It is found in the cell inner membrane. The catalysed reaction is [GlcNAc-(1-&gt;4)-Mur2Ac(oyl-L-Ala-gamma-D-Glu-L-Lys-D-Ala-D-Ala)](n)-di-trans,octa-cis-undecaprenyl diphosphate + beta-D-GlcNAc-(1-&gt;4)-Mur2Ac(oyl-L-Ala-gamma-D-Glu-L-Lys-D-Ala-D-Ala)-di-trans,octa-cis-undecaprenyl diphosphate = [GlcNAc-(1-&gt;4)-Mur2Ac(oyl-L-Ala-gamma-D-Glu-L-Lys-D-Ala-D-Ala)](n+1)-di-trans,octa-cis-undecaprenyl diphosphate + di-trans,octa-cis-undecaprenyl diphosphate + H(+). The protein operates within cell wall biogenesis; peptidoglycan biosynthesis. Peptidoglycan polymerase that is essential for cell division. In Alkalilimnicola ehrlichii (strain ATCC BAA-1101 / DSM 17681 / MLHE-1), this protein is Probable peptidoglycan glycosyltransferase FtsW.